The primary structure comprises 126 residues: MNQRLSPIKVEVKTEYIEAQSTPDEEKYLFSYTITIINLGDQDVTLKSRYWCITDANGQQSEVEGAGVVGETPTIKPNTAYQYTSGTVLETPFGVMEGNYTMIKSNGEEFKAPISAFSLAVPGLLH.

Positions 2–126 (NQRLSPIKVE…FSLAVPGLLH (125 aa)) constitute an ApaG domain.

The chain is Protein ApaG from Shewanella piezotolerans (strain WP3 / JCM 13877).